The primary structure comprises 592 residues: A-type ATP synthase subunit A (592 aa).

ATP is bound at residue 233 to 240 (GPFGSGKT).

This sequence belongs to the ATPase alpha/beta chains family. In terms of assembly, has multiple subunits with at least A(3), B(3), C, D, E, F, H, I and proteolipid K(x).

It is found in the cell membrane. It carries out the reaction ATP + H2O + 4 H(+)(in) = ADP + phosphate + 5 H(+)(out). Functionally, component of the A-type ATP synthase that produces ATP from ADP in the presence of a proton gradient across the membrane. The A chain is the catalytic subunit. In Saccharolobus islandicus (strain Y.N.15.51 / Yellowstone #2) (Sulfolobus islandicus), this protein is A-type ATP synthase subunit A.